A 500-amino-acid chain; its full sequence is Lysine--tRNA ligase (500 aa).

Mg(2+) contacts are provided by Glu-409 and Glu-416.

It belongs to the class-II aminoacyl-tRNA synthetase family. As to quaternary structure, homodimer. Mg(2+) is required as a cofactor.

The protein resides in the cytoplasm. The catalysed reaction is tRNA(Lys) + L-lysine + ATP = L-lysyl-tRNA(Lys) + AMP + diphosphate. The protein is Lysine--tRNA ligase of Lysinibacillus sphaericus (strain C3-41).